Here is a 149-residue protein sequence, read N- to C-terminus: Aquaporin-like protein 2 (149 aa).

The disordered stretch occupies residues 1-35 (MSNESNDLEKNISHLDPTGVDNAYIPPEQPETKHS). Residues 1–47 (MSNESNDLEKNISHLDPTGVDNAYIPPEQPETKHSRFNIDRDTLRNH) are Cytoplasmic-facing. Residues 48-68 (FIAAVGEFCGTFMFLWCAYVI) form a helical membrane-spanning segment. Topologically, residues 69 to 89 (CNVANHDVALTTEPEGSHPGQ) are extracellular. A helical transmembrane segment spans residues 90-110 (LIMIALGFGFSVMFSIWCFWW). At 111–149 (GFEPSRFSLFVFGQSHLTSQMCSDVVSSDHCWDGCWWCR) the chain is on the cytoplasmic side.

The protein belongs to the MIP/aquaporin (TC 1.A.8) family.

It is found in the endoplasmic reticulum membrane. Its subcellular location is the cell membrane. Water channel required to facilitate the transport of water across membranes. Involved in freeze tolerance, osmotolerance and cell flocculation in liquid cultures. Is non-functional in most laboratory strains. The sequence is that of Aquaporin-like protein 2 (AQY2-2) from Saccharomyces cerevisiae (strain JAY291) (Baker's yeast).